A 194-amino-acid chain; its full sequence is Ubiquitin-conjugating enzyme E2 T (194 aa).

Residues Q2–I152 form the UBC core domain. Catalysis depends on C86, which acts as the Glycyl thioester intermediate. 2 stretches are compositionally biased toward basic and acidic residues: residues C158 to N170 and N185 to L194. The segment at C158 to L194 is disordered.

It belongs to the ubiquitin-conjugating enzyme family.

The protein resides in the nucleus. It carries out the reaction S-ubiquitinyl-[E1 ubiquitin-activating enzyme]-L-cysteine + [E2 ubiquitin-conjugating enzyme]-L-cysteine = [E1 ubiquitin-activating enzyme]-L-cysteine + S-ubiquitinyl-[E2 ubiquitin-conjugating enzyme]-L-cysteine.. The protein operates within protein modification; protein ubiquitination. Functionally, accepts ubiquitin from the E1 complex and catalyzes its covalent attachment to other proteins. Catalyzes monoubiquitination. Involved in DNA repair. This is Ubiquitin-conjugating enzyme E2 T (ube2t) from Danio rerio (Zebrafish).